Here is a 398-residue protein sequence, read N- to C-terminus: tRNA pseudouridine synthase D (398 aa).

Aspartate 76 (nucleophile) is an active-site residue. The TRUD domain maps to 151-361 (GVPNRFGVQR…MEGERRPLRV (211 aa)).

The protein belongs to the pseudouridine synthase TruD family.

The catalysed reaction is uridine(13) in tRNA = pseudouridine(13) in tRNA. In terms of biological role, responsible for synthesis of pseudouridine from uracil-13 in transfer RNAs. This Geobacter sp. (strain M21) protein is tRNA pseudouridine synthase D.